We begin with the raw amino-acid sequence, 142 residues long: MRLLGLDVGSKTIGVAVSDPLGITAQSVMTIPIDEDRHNFGMRSLKKLVREYEANGFVLGLPKNMDGTAGRSVSRSKAMGERLEQKFGLPVYYDDERLTTVASERILVEEAGMHDRRQRKEVVDQMAAVLILQNYLDLQRKE.

This sequence belongs to the YqgF nuclease family.

It localises to the cytoplasm. Functionally, could be a nuclease involved in processing of the 5'-end of pre-16S rRNA. This is Putative pre-16S rRNA nuclease from Lactobacillus delbrueckii subsp. bulgaricus (strain ATCC 11842 / DSM 20081 / BCRC 10696 / JCM 1002 / NBRC 13953 / NCIMB 11778 / NCTC 12712 / WDCM 00102 / Lb 14).